We begin with the raw amino-acid sequence, 251 residues long: Diphthine synthase (251 aa).

S-adenosyl-L-methionine contacts are provided by residues Leu9, Asp85, Val88, 113 to 114, Leu165, Ala202, and His227; that span reads SI.

This sequence belongs to the diphthine synthase family. In terms of assembly, homodimer.

It carries out the reaction 2-[(3S)-amino-3-carboxypropyl]-L-histidyl-[translation elongation factor 2] + 3 S-adenosyl-L-methionine = diphthine-[translation elongation factor 2] + 3 S-adenosyl-L-homocysteine + 3 H(+). The protein operates within protein modification; peptidyl-diphthamide biosynthesis. Functionally, S-adenosyl-L-methionine-dependent methyltransferase that catalyzes the trimethylation of the amino group of the modified target histidine residue in translation elongation factor 2 (EF-2), to form an intermediate called diphthine. The three successive methylation reactions represent the second step of diphthamide biosynthesis. The chain is Diphthine synthase from Methanosphaerula palustris (strain ATCC BAA-1556 / DSM 19958 / E1-9c).